A 483-amino-acid chain; its full sequence is Acetyl-coenzyme A carboxylase carboxyl transferase subunit beta, chloroplastic (483 aa).

The region spanning 219-483 (LWVQCENCYG…LHTFFPLNQN (265 aa)) is the CoA carboxyltransferase N-terminal domain. The Zn(2+) site is built by C223, C226, C242, and C245. The segment at 223–245 (CENCYGLNYKKFFKSKMNLCEQC) adopts a C4-type zinc-finger fold.

The protein belongs to the AccD/PCCB family. As to quaternary structure, acetyl-CoA carboxylase is a heterohexamer composed of biotin carboxyl carrier protein, biotin carboxylase and 2 subunits each of ACCase subunit alpha and ACCase plastid-coded subunit beta (accD). It depends on Zn(2+) as a cofactor.

The protein localises to the plastid. The protein resides in the chloroplast stroma. The catalysed reaction is N(6)-carboxybiotinyl-L-lysyl-[protein] + acetyl-CoA = N(6)-biotinyl-L-lysyl-[protein] + malonyl-CoA. It functions in the pathway lipid metabolism; malonyl-CoA biosynthesis; malonyl-CoA from acetyl-CoA: step 1/1. Functionally, component of the acetyl coenzyme A carboxylase (ACC) complex. Biotin carboxylase (BC) catalyzes the carboxylation of biotin on its carrier protein (BCCP) and then the CO(2) group is transferred by the transcarboxylase to acetyl-CoA to form malonyl-CoA. The polypeptide is Acetyl-coenzyme A carboxylase carboxyl transferase subunit beta, chloroplastic (Guizotia abyssinica (Niger)).